Reading from the N-terminus, the 346-residue chain is MTQHRPPLEIRLCGPRGFCAGVDRAIQIVVLALKKYGAPVYVRHEIVHNRYVVEGLQARGAIFVEELDEIPAAHRNQPVVFSAHGVPKSVPADAEAKNLFYLDATCPLVSKVHKQAMRHQRLGRHVILIGHSGHPEVIGTMGQLPDGAVTLIETVEDAHTCHFDDEDNLGFVTQTTLSVDDTAGIIKELQARFPNLAAPAAESICYATTNRQDAVRAAAPGCDLFLIVGAPNSSNSKRLVEVAEKAGARMSMLVQRAEDIEWEQIGDISVVGLSAGASAPEIIVDEIIDAFKARFDVKIELAETTVETENFLVNREIRDVELTVKDMAFVNGEHRVVGISKLMQGK.

[4Fe-4S] cluster is bound at residue cysteine 19. (2E)-4-hydroxy-3-methylbut-2-enyl diphosphate contacts are provided by histidine 48 and histidine 84. Positions 48 and 84 each coordinate dimethylallyl diphosphate. 2 residues coordinate isopentenyl diphosphate: histidine 48 and histidine 84. Position 106 (cysteine 106) interacts with [4Fe-4S] cluster. Residue histidine 134 coordinates (2E)-4-hydroxy-3-methylbut-2-enyl diphosphate. Residue histidine 134 participates in dimethylallyl diphosphate binding. An isopentenyl diphosphate-binding site is contributed by histidine 134. Residue glutamate 136 is the Proton donor of the active site. Threonine 175 lines the (2E)-4-hydroxy-3-methylbut-2-enyl diphosphate pocket. Cysteine 205 contributes to the [4Fe-4S] cluster binding site. (2E)-4-hydroxy-3-methylbut-2-enyl diphosphate is bound by residues serine 233, serine 234, asparagine 235, and serine 278. Dimethylallyl diphosphate is bound by residues serine 233, serine 234, asparagine 235, and serine 278. Serine 233, serine 234, asparagine 235, and serine 278 together coordinate isopentenyl diphosphate.

This sequence belongs to the IspH family. The cofactor is [4Fe-4S] cluster.

The catalysed reaction is isopentenyl diphosphate + 2 oxidized [2Fe-2S]-[ferredoxin] + H2O = (2E)-4-hydroxy-3-methylbut-2-enyl diphosphate + 2 reduced [2Fe-2S]-[ferredoxin] + 2 H(+). The enzyme catalyses dimethylallyl diphosphate + 2 oxidized [2Fe-2S]-[ferredoxin] + H2O = (2E)-4-hydroxy-3-methylbut-2-enyl diphosphate + 2 reduced [2Fe-2S]-[ferredoxin] + 2 H(+). Its pathway is isoprenoid biosynthesis; dimethylallyl diphosphate biosynthesis; dimethylallyl diphosphate from (2E)-4-hydroxy-3-methylbutenyl diphosphate: step 1/1. It functions in the pathway isoprenoid biosynthesis; isopentenyl diphosphate biosynthesis via DXP pathway; isopentenyl diphosphate from 1-deoxy-D-xylulose 5-phosphate: step 6/6. Its function is as follows. Catalyzes the conversion of 1-hydroxy-2-methyl-2-(E)-butenyl 4-diphosphate (HMBPP) into a mixture of isopentenyl diphosphate (IPP) and dimethylallyl diphosphate (DMAPP). Acts in the terminal step of the DOXP/MEP pathway for isoprenoid precursor biosynthesis. This Brucella melitensis biotype 1 (strain ATCC 23456 / CCUG 17765 / NCTC 10094 / 16M) protein is 4-hydroxy-3-methylbut-2-enyl diphosphate reductase.